Here is a 520-residue protein sequence, read N- to C-terminus: MTINQNNSNHTFSSHNLDNSPHKINKLINKFSDYIWPIKRQELSKFLFITLLMFCILFIQNLIRALKDSIVTTMIGAETISFLKFWGVMPCAFLMTAIYVKLVNRMKAENIFYLIISIFLAFFALFAYVIFPNHEILHLSPTTAQNLIASLPNLKWFILLLSKWSFSLFYIIAELWPNVAFALLFWQFVNNITTVEESKRFYPLFGLLSQTGIYLAGQFLENLSHINEYVVAKFSLQASFHTLSVQIILTIVLILGIVGIKTFWLLNHKVLDKEHMALLRFKAKKKTMTIAESFQMILSSRHIRLIATLLICYGIAINLVEGPWKAAATKIYKTPTEYAAFIGNYLSYTGAFTILFVVLGSNIVRKLGWFTAAIITPIIVFTTGILFFAVNNFESSAGLIVASFILTDPALIAITIGAIQNVLSKSSKYTLFDSTKEMAYVPLDKEIKIKGKAAADVLGTKLGKSGSAFLQSLVFIILPSASYQSISVCLMFIFIITCLIWFWAVKELNKEYKKSVKFSQ.

The next 12 membrane-spanning stretches (helical) occupy residues 43-63, 80-100, 111-131, 166-186, 201-221, 240-260, 305-325, 339-359, 370-390, 399-419, 462-482, and 485-505; these read LSKFLFITLLMFCILFIQNLI, ISFLKFWGVMPCAFLMTAIYV, IFYLIISIFLAFFALFAYVIF, FSLFYIIAELWPNVAFALLFW, FYPLFGLLSQTGIYLAGQFLE, FHTLSVQIILTIVLILGIVGI, LIATLLICYGIAINLVEGPWK, AAFIGNYLSYTGAFTILFVVL, FTAAIITPIIVFTTGILFFAV, LIVASFILTDPALIAITIGAI, LGKSGSAFLQSLVFIILPSAS, and SISVCLMFIFIITCLIWFWAV.

Belongs to the ADP/ATP translocase tlc family.

It localises to the cell membrane. In terms of biological role, provides the rickettsial cell with host ATP in exchange for rickettsial ADP. This is an obligate exchange system. This energy acquiring activity is an important component of rickettsial parasitism. In Rickettsia bellii (strain RML369-C), this protein is ADP,ATP carrier protein 4 (tlcD).